Consider the following 113-residue polypeptide: Small ribosomal subunit protein uS17 (113 aa).

It belongs to the universal ribosomal protein uS17 family. Part of the 30S ribosomal subunit.

In terms of biological role, one of the primary rRNA binding proteins, it binds specifically to the 5'-end of 16S ribosomal RNA. The chain is Small ribosomal subunit protein uS17 from Nanoarchaeum equitans (strain Kin4-M).